Consider the following 305-residue polypeptide: Acetylglutamate kinase (305 aa).

Substrate-binding positions include 67–68, arginine 89, and asparagine 190; that span reads GG.

It belongs to the acetylglutamate kinase family. ArgB subfamily.

It is found in the cytoplasm. The catalysed reaction is N-acetyl-L-glutamate + ATP = N-acetyl-L-glutamyl 5-phosphate + ADP. Its pathway is amino-acid biosynthesis; L-arginine biosynthesis; N(2)-acetyl-L-ornithine from L-glutamate: step 2/4. Its function is as follows. Catalyzes the ATP-dependent phosphorylation of N-acetyl-L-glutamate. The sequence is that of Acetylglutamate kinase from Bifidobacterium animalis subsp. lactis (strain AD011).